A 533-amino-acid polypeptide reads, in one-letter code: MGVFRFISISLAAVSAANAAQILSMPHAQTVPNSYIVMMKDDTSDDDFNHHQSWLQSTHTHNITRRATIQNAGMRHKYNFSKMKGYSGIFDEETIKDIAKDPKVMFVEPDTIISVHGKVEQSNVPSWGLARISNPQPGAGSYIYDSSAGEGITVYSVDTGVDVNHEDFEGRAIWGSNQVNDGDDRDGSGHGTHTSGTMVGKEFGIAKKAKLVAVKVLGNDGSGPTSGIVAGINWSVEHARQNGGTKKAVMNMSLGGSSSSALNRAAAQAVEQGMFLSVAAGNDNQDAQSSSPASEPSVCTVGSSAEDDSRSSFSNWGPAIDLFAPGSNIISARPGGGSQSMSGTSMAAPHVAGLAAYLMALEGISGGAVCDRLKELGTSSITDAGPGTPTNVLINNGGAKGGKPNPNPAPSPSPSPSQPSEPQQPTPSQPGQPGEPFPGEPQQPTPSQPGQPGEPFPGEPFPGEPFPGEPFPGESFPGESFPGESAPAPAPMPPSPQHPHTPYPGGDNFDFDGLWKKYFGGEHWRKMFSSFWN.

A signal peptide spans 1 to 19; that stretch reads MGVFRFISISLAAVSAANA. The propeptide occupies 20-116; the sequence is AQILSMPHAQ…VEPDTIISVH (97 aa). The Inhibitor I9 domain maps to 34-115; it reads SYIVMMKDDT…FVEPDTIISV (82 aa). The Peptidase S8 domain occupies 126–400; it reads SWGLARISNP…NVLINNGGAK (275 aa). Residues Asp158 and His190 each act as charge relay system in the active site. The disordered stretch occupies residues 175–198; sequence GSNQVNDGDDRDGSGHGTHTSGTM. Asn233 and Asn251 each carry an N-linked (GlcNAc...) asparagine glycan. The span at 282–294 shows a compositional bias: polar residues; that stretch reads NDNQDAQSSSPAS. The interval 282-312 is disordered; the sequence is NDNQDAQSSSPASEPSVCTVGSSAEDDSRSS. Catalysis depends on Ser345, which acts as the Charge relay system. Residues 378–394 show a composition bias toward polar residues; the sequence is TSSITDAGPGTPTNVLI. Residues 378-512 are disordered; that stretch reads TSSITDAGPG…YPGGDNFDFD (135 aa). Residues 405–470 show a composition bias toward pro residues; the sequence is NPNPAPSPSP…FPGEPFPGEP (66 aa). The span at 471-487 shows a compositional bias: low complexity; that stretch reads FPGESFPGESFPGESAP. Residues 488–502 show a composition bias toward pro residues; that stretch reads APAPMPPSPQHPHTP.

The protein belongs to the peptidase S8 family.

The protein localises to the secreted. Functionally, secreted subtilisin-like serine protease with keratinolytic activity that contributes to pathogenicity. The polypeptide is Subtilisin-like protease 1 (SUB1) (Arthroderma benhamiae (strain ATCC MYA-4681 / CBS 112371) (Trichophyton mentagrophytes)).